The primary structure comprises 316 residues: Fe-S cluster assembly protein dre2 (316 aa).

Residues 1–128 are N-terminal SAM-like domain; the sequence is MAPRCLLIGT…KPEQEEPVSI (128 aa). Residues 129–208 form a linker region; the sequence is PLKFGKNKAN…EDDLITEADM (80 aa). The interval 141–177 is disordered; sequence SATNGTNGAVNPDGSVPLNLNRKRDQPEPVKPAGVGF. [2Fe-2S] cluster-binding residues include Cys-218, Cys-229, Cys-232, and Cys-234. The segment at 218–234 is fe-S binding site A; that stretch reads CQPKPGKRRRACKDCTC. Positions 279, 282, 290, and 293 each coordinate [4Fe-4S] cluster. 2 consecutive short sequence motifs (cx2C motif) follow at residues 279–282 and 290–293; these read CGNC and CDGC. The segment at 279–293 is fe-S binding site B; it reads CGNCALGDAFRCDGC.

This sequence belongs to the anamorsin family. Monomer. Interacts with TAH18. Interacts with MIA40. [2Fe-2S] cluster is required as a cofactor. Requires [4Fe-4S] cluster as cofactor.

It localises to the cytoplasm. The protein resides in the mitochondrion intermembrane space. Functionally, component of the cytosolic iron-sulfur (Fe-S) protein assembly (CIA) machinery required for the maturation of extramitochondrial Fe-S proteins. Part of an electron transfer chain functioning in an early step of cytosolic Fe-S biogenesis, facilitating the de novo assembly of a [4Fe-4S] cluster on the scaffold complex CFD1-NBP35. Electrons are transferred to DRE2 from NADPH via the FAD- and FMN-containing protein TAH18. TAH18-DRE2 are also required for the assembly of the diferric tyrosyl radical cofactor of ribonucleotide reductase (RNR), probably by providing electrons for reduction during radical cofactor maturation in the catalytic small subunit RNR2. This is Fe-S cluster assembly protein dre2 from Pyrenophora tritici-repentis (strain Pt-1C-BFP) (Wheat tan spot fungus).